The primary structure comprises 288 residues: 4-diphosphocytidyl-2-C-methyl-D-erythritol kinase (288 aa).

Lys13 is a catalytic residue. ATP is bound at residue 97–107 (PMGGGIGGGSS). Residue Asp139 is part of the active site.

The protein belongs to the GHMP kinase family. IspE subfamily.

It carries out the reaction 4-CDP-2-C-methyl-D-erythritol + ATP = 4-CDP-2-C-methyl-D-erythritol 2-phosphate + ADP + H(+). Its pathway is isoprenoid biosynthesis; isopentenyl diphosphate biosynthesis via DXP pathway; isopentenyl diphosphate from 1-deoxy-D-xylulose 5-phosphate: step 3/6. In terms of biological role, catalyzes the phosphorylation of the position 2 hydroxy group of 4-diphosphocytidyl-2C-methyl-D-erythritol. The protein is 4-diphosphocytidyl-2-C-methyl-D-erythritol kinase of Saccharophagus degradans (strain 2-40 / ATCC 43961 / DSM 17024).